The following is a 100-amino-acid chain: Urease subunit gamma (100 aa).

The protein belongs to the urease gamma subunit family. Heterotrimer of UreA (gamma), UreB (beta) and UreC (alpha) subunits. Three heterotrimers associate to form the active enzyme.

The protein localises to the cytoplasm. The enzyme catalyses urea + 2 H2O + H(+) = hydrogencarbonate + 2 NH4(+). Its pathway is nitrogen metabolism; urea degradation; CO(2) and NH(3) from urea (urease route): step 1/1. The protein is Urease subunit gamma of Rhizobium etli (strain ATCC 51251 / DSM 11541 / JCM 21823 / NBRC 15573 / CFN 42).